Consider the following 151-residue polypeptide: Large ribosomal subunit protein uL23m (151 aa).

Basic and acidic residues predominate over residues 120–143 (DDKKSLEDAKKNHKKFLDKNKDRP). The disordered stretch occupies residues 120 to 151 (DDKKSLEDAKKNHKKFLDKNKDRPGTPGWFSI).

Belongs to the universal ribosomal protein uL23 family. In terms of assembly, component of the mitochondrial ribosome large subunit (39S) which comprises a 16S rRNA and about 50 distinct proteins.

It is found in the mitochondrion. The polypeptide is Large ribosomal subunit protein uL23m (mRpL23) (Anopheles gambiae (African malaria mosquito)).